The primary structure comprises 308 residues: Glutamyl-Q tRNA(Asp) synthetase (308 aa).

L-glutamate is bound by residues 19-23 (RFAPS) and Glu-55. Residues 22-32 (PSPSGELHFGS) carry the 'HIGH' region motif. Zn(2+)-binding residues include Cys-111, Cys-113, Tyr-125, and Cys-129. L-glutamate-binding residues include Tyr-182 and Arg-200. The short motif at 238 to 242 (KLSKQ) is the 'KMSKS' region element. Position 241 (Lys-241) interacts with ATP.

It belongs to the class-I aminoacyl-tRNA synthetase family. GluQ subfamily. It depends on Zn(2+) as a cofactor.

In terms of biological role, catalyzes the tRNA-independent activation of glutamate in presence of ATP and the subsequent transfer of glutamate onto a tRNA(Asp). Glutamate is transferred on the 2-amino-5-(4,5-dihydroxy-2-cyclopenten-1-yl) moiety of the queuosine in the wobble position of the QUC anticodon. The chain is Glutamyl-Q tRNA(Asp) synthetase from Shigella flexneri.